A 399-amino-acid chain; its full sequence is Bombesin receptor subtype-3 (399 aa).

Residues 1 to 41 (MSQRQSQSPNQTLISITNDTETSSSVVSNDTTHKGWTGDNS) lie on the Extracellular side of the membrane. N-linked (GlcNAc...) asparagine glycans are attached at residues Asn-10, Asn-18, and Asn-29. Residues 42 to 63 (PGIEALCAIYITYAGIISVGIL) traverse the membrane as a helical segment. Over 64–82 (GNAILIKVFFKTKSMQTVP) the chain is Cytoplasmic. A helical transmembrane segment spans residues 83 to 103 (NIFITSLAFGDLLLLLTCVPV). Residues 104 to 121 (DATHYLAEGWLFGKVGCK) are Extracellular-facing. A disulfide bridge links Cys-120 with Cys-203. A helical membrane pass occupies residues 122–143 (VLSFIRLTSVGVSVFTLTILSA). Over 144 to 163 (DRYKAVVKPLERQPPNAILK) the chain is Cytoplasmic. The helical transmembrane segment at 164-184 (TCAKAGGIWIVSMIFALPEAI) threads the bilayer. The Extracellular segment spans residues 185–220 (FSNVYTFQDPNRNVTFESCNSYPISERLLQEIHSLL). A helical transmembrane segment spans residues 221–241 (CFLVFYIIPLSIISVYYSLIA). Residues 242–272 (RTLYKSTLNIPTEEQSHARKQIESRKRIAKT) lie on the Cytoplasmic side of the membrane. A helical transmembrane segment spans residues 273–293 (VLVLVALFALCWLPNHLLYLY). Residues 294–313 (HSFTYESYANHSDVPFVIII) are Extracellular-facing. The helical transmembrane segment at 314–333 (FSRVLAFSNSCVNPFALYWL) threads the bilayer. At 334–399 (SKTFQQHFKA…SSAKKGEDKV (66 aa)) the chain is on the cytoplasmic side. Residue Cys-347 is the site of S-palmitoyl cysteine attachment.

This sequence belongs to the G-protein coupled receptor 1 family. In terms of assembly, interacts with C6orf89.

The protein localises to the cell membrane. Functionally, role in sperm cell division, maturation, or function. This receptor mediates its action by association with G proteins that activate a phosphatidylinositol-calcium second messenger system. The sequence is that of Bombesin receptor subtype-3 (Brs3) from Mus musculus (Mouse).